A 327-amino-acid polypeptide reads, in one-letter code: MEKNYYALAYYYFGPVSNPHEEIALHKQLFKTMDVSCRIYISEEGINGQFSGYQPDAERYMAWLKQRPDFASIKFKIHHIEENIFPRVTVKYRKELVALGCSVDTTKQGKHISPEEWHEKLQENRCLVLDVRNNYEWKIGHFENAVLPDIETFREFPDYADRLAKEHDPAKTPVMMYCTGGIRCELYSALLLEKGFKEVYQLDGGVIAYGLKMGTGKWRGKLFVFDDRMAMPIDEADPNVSPIARCSLCNTDSDTYYNCANTDCNNLFICCESCIATHKGCCSEECSQAPRIRAFSAERGNKPFRRKHLCPTIEQSCCLKEQENQPA.

One can recognise a Rhodanese domain in the interval 122–218; it reads QENRCLVLDV…YGLKMGTGKW (97 aa). The active-site Cysteine persulfide intermediate is Cys178.

Belongs to the TrhO family.

The catalysed reaction is uridine(34) in tRNA + AH2 + O2 = 5-hydroxyuridine(34) in tRNA + A + H2O. Functionally, catalyzes oxygen-dependent 5-hydroxyuridine (ho5U) modification at position 34 in tRNAs. This Chlamydia trachomatis serovar A (strain ATCC VR-571B / DSM 19440 / HAR-13) protein is tRNA uridine(34) hydroxylase.